The sequence spans 180 residues: Large ribosomal subunit protein uL6 (180 aa).

It belongs to the universal ribosomal protein uL6 family. As to quaternary structure, part of the 50S ribosomal subunit.

This protein binds to the 23S rRNA, and is important in its secondary structure. It is located near the subunit interface in the base of the L7/L12 stalk, and near the tRNA binding site of the peptidyltransferase center. The polypeptide is Large ribosomal subunit protein uL6 (Clostridium botulinum (strain Eklund 17B / Type B)).